We begin with the raw amino-acid sequence, 545 residues long: CTP synthase (545 aa).

The amidoligase domain stretch occupies residues 1 to 266 (MTTNYIFVTG…DDLVCARFGI (266 aa)). Ser14 is a CTP binding site. Ser14 contacts UTP. ATP-binding positions include 15 to 20 (SLGKGI) and Asp72. Positions 72 and 140 each coordinate Mg(2+). CTP-binding positions include 147–149 (DIE), 187–192 (KTKPTQ), and Lys223. Residues 187-192 (KTKPTQ) and Lys223 each bind UTP. Position 239-241 (239-241 (KDV)) interacts with ATP. Positions 291-542 (TIGMVGKYTE…VKAAGQFQRG (252 aa)) constitute a Glutamine amidotransferase type-1 domain. L-glutamine is bound at residue Gly352. Cys379 acts as the Nucleophile; for glutamine hydrolysis in catalysis. L-glutamine is bound by residues 380–383 (LGMQ), Glu403, and Arg470. Residues His515 and Glu517 contribute to the active site.

This sequence belongs to the CTP synthase family. In terms of assembly, homotetramer.

The catalysed reaction is UTP + L-glutamine + ATP + H2O = CTP + L-glutamate + ADP + phosphate + 2 H(+). It carries out the reaction L-glutamine + H2O = L-glutamate + NH4(+). It catalyses the reaction UTP + NH4(+) + ATP = CTP + ADP + phosphate + 2 H(+). Its pathway is pyrimidine metabolism; CTP biosynthesis via de novo pathway; CTP from UDP: step 2/2. With respect to regulation, allosterically activated by GTP, when glutamine is the substrate; GTP has no effect on the reaction when ammonia is the substrate. The allosteric effector GTP functions by stabilizing the protein conformation that binds the tetrahedral intermediate(s) formed during glutamine hydrolysis. Inhibited by the product CTP, via allosteric rather than competitive inhibition. Catalyzes the ATP-dependent amination of UTP to CTP with either L-glutamine or ammonia as the source of nitrogen. Regulates intracellular CTP levels through interactions with the four ribonucleotide triphosphates. The protein is CTP synthase of Vibrio cholerae serotype O1 (strain ATCC 39541 / Classical Ogawa 395 / O395).